Reading from the N-terminus, the 299-residue chain is Neomycin C epimerase (299 aa).

The Radical SAM core domain maps to 10 to 222; it reads PVRQVRAYRN…WNHIFETGRR (213 aa). Cys-26, Cys-30, Cys-33, Cys-226, and Cys-247 together coordinate [4Fe-4S] cluster. Residue Cys-249 is the Proton donor of the active site. [4Fe-4S] cluster is bound by residues Cys-271 and Cys-274.

The protein belongs to the radical SAM superfamily. The cofactor is [4Fe-4S] cluster.

It catalyses the reaction neomycin C + AH2 + S-adenosyl-L-methionine = neomycin B + 5'-deoxyadenosine + L-methionine + A + H(+). The protein operates within antibiotic biosynthesis; neomycin biosynthesis. Catalyzes the last step of neomycin B biosynthesis, i.e. the irreversible epimerization at C-5''' of neomycin C to give neomycin B. To a lesser extent, is also able to convert neomycin Y2 to neomycin Y1. The polypeptide is Neomycin C epimerase (Streptomyces fradiae (Streptomyces roseoflavus)).